Reading from the N-terminus, the 153-residue chain is 3-hydroxyacyl-[acyl-carrier-protein] dehydratase FabZ (153 aa).

Histidine 56 is an active-site residue.

This sequence belongs to the thioester dehydratase family. FabZ subfamily.

The protein resides in the cytoplasm. It carries out the reaction a (3R)-hydroxyacyl-[ACP] = a (2E)-enoyl-[ACP] + H2O. Its function is as follows. Involved in unsaturated fatty acids biosynthesis. Catalyzes the dehydration of short chain beta-hydroxyacyl-ACPs and long chain saturated and unsaturated beta-hydroxyacyl-ACPs. The protein is 3-hydroxyacyl-[acyl-carrier-protein] dehydratase FabZ of Halorhodospira halophila (strain DSM 244 / SL1) (Ectothiorhodospira halophila (strain DSM 244 / SL1)).